The sequence spans 319 residues: Cytochrome f (319 aa).

The first 35 residues, 1-35, serve as a signal peptide directing secretion; that stretch reads MQKKDVCEYITKWVSVTISTLVTIGVLVFPLSSEA. Heme is bound by residues Tyr36, Cys56, Cys59, and His60. The chain crosses the membrane as a helical span at residues 285 to 305; that stretch reads IQGLLVFFASVVLAQIFLVLK.

The protein belongs to the cytochrome f family. The 4 large subunits of the cytochrome b6-f complex are cytochrome b6, subunit IV (17 kDa polypeptide, petD), cytochrome f and the Rieske protein, while the 4 small subunits are PetG, PetL, PetM and PetN. The complex functions as a dimer. Heme is required as a cofactor.

It localises to the plastid. The protein localises to the chloroplast thylakoid membrane. Functionally, component of the cytochrome b6-f complex, which mediates electron transfer between photosystem II (PSII) and photosystem I (PSI), cyclic electron flow around PSI, and state transitions. This is Cytochrome f from Zygnema circumcarinatum (Green alga).